Reading from the N-terminus, the 209-residue chain is Chaperone protein TorD (209 aa).

The protein belongs to the TorD/DmsD family. TorD subfamily.

Its subcellular location is the cytoplasm. In terms of biological role, involved in the biogenesis of TorA. Acts on TorA before the insertion of the molybdenum cofactor and, as a result, probably favors a conformation of the apoenzyme that is competent for acquiring the cofactor. The protein is Chaperone protein TorD of Salmonella bongori (strain ATCC 43975 / DSM 13772 / NCTC 12419).